A 1367-amino-acid chain; its full sequence is Paired amphipathic helix protein Sin3-like 2 (1367 aa).

A disordered region spans residues 14-44; the sequence is QFKRPLGSSRGESYEQSPITGGGSIGEGGIN. Positions 33–42 are enriched in gly residues; the sequence is TGGGSIGEGG. PAH domains follow at residues 46–116 and 130–200; these read QKLT…LPKG and KTVE…LPDS. The disordered stretch occupies residues 212–322; the sequence is SQAQRYDDRG…EAYSGPASHS (111 aa). Basic and acidic residues-rich tracts occupy residues 230–286 and 299–311; these read MFME…SRDL and FSEK…RMEG. The 70-residue stretch at 327–396 folds into the PAH 3 domain; that stretch reads LKSMYNQAFL…DEFNQFFERC (70 aa). Disordered stretches follow at residues 417–446, 786–883, 912–946, and 958–1031; these read EENL…KERS, DVHA…LSKP, QSDT…DSED, and ATAK…EGME. Basic and acidic residues-rich tracts occupy residues 424-446 and 806-819; these read VKGE…KERS and SSGK…DLAN. Polar residues-rich tracts occupy residues 851–876 and 912–923; these read ATSS…SSGS and QSDTSKANSNYD. The span at 958-967 shows a compositional bias: basic and acidic residues; that stretch reads ATAKTEHSVE. Acidic residues-rich tracts occupy residues 968 to 989 and 997 to 1016; these read AEGE…EAGE and IGDE…EHDE. The residue at position 1023 (Ser1023) is a Phosphoserine.

It localises to the nucleus. Functionally, acts as a transcriptional repressor. Plays roles in regulating gene expression and genome stability. This Arabidopsis thaliana (Mouse-ear cress) protein is Paired amphipathic helix protein Sin3-like 2 (SNL2).